We begin with the raw amino-acid sequence, 137 residues long: F420H(2)-dependent biliverdin reductase (137 aa).

Residues His36 to Gly41, Ile54 to Thr55, Gln60 to Lys61, Arg67, and Gly78 to Trp81 contribute to the coenzyme F420-(gamma-Glu)n site.

It belongs to the F420H(2)-dependent biliverdin reductase family. Homodimer.

It is found in the cell surface. The protein resides in the secreted. It catalyses the reaction (4Z,15Z)-bilirubin IXalpha + oxidized coenzyme F420-(gamma-L-Glu)(n) + H(+) = biliverdin IXalpha + reduced coenzyme F420-(gamma-L-Glu)(n). Functionally, catalyzes the F420H(2)-dependent reduction of biliverdin-IXalpha at C10 position, leading to bilirubin-IXalpha, a potent antioxidant. As biliverdin-IXalpha is produced in high amounts in macrophages infected with M.tuberculosis, its reduction by Rv2074 may play a role in protecting mycobacteria against oxidative stress, aiding the persistence of M.tuberculosis infection. This Mycobacterium tuberculosis (strain CDC 1551 / Oshkosh) protein is F420H(2)-dependent biliverdin reductase.